Consider the following 251-residue polypeptide: Hydroxyacylglutathione hydrolase (251 aa).

The Zn(2+) site is built by H58, H60, D62, H63, H116, D135, and H173.

This sequence belongs to the metallo-beta-lactamase superfamily. Glyoxalase II family. In terms of assembly, monomer. Zn(2+) serves as cofactor.

It carries out the reaction an S-(2-hydroxyacyl)glutathione + H2O = a 2-hydroxy carboxylate + glutathione + H(+). It functions in the pathway secondary metabolite metabolism; methylglyoxal degradation; (R)-lactate from methylglyoxal: step 2/2. In terms of biological role, thiolesterase that catalyzes the hydrolysis of S-D-lactoyl-glutathione to form glutathione and D-lactic acid. The sequence is that of Hydroxyacylglutathione hydrolase from Bdellovibrio bacteriovorus (strain ATCC 15356 / DSM 50701 / NCIMB 9529 / HD100).